The chain runs to 506 residues: UBX domain-containing protein 4 (506 aa).

An interaction with UBQLN1 region spans residues 1-199 (MLWFQGAIPA…PAEDLTVRVE (199 aa)). At 1–411 (MLWFQGAIPA…VHSSSGDIWT (411 aa)) the chain is on the cytoplasmic side. The tract at residues 110–194 (QQMHSSKGEA…CSNQRPAEDL (85 aa)) is disordered. 2 stretches are compositionally biased toward polar residues: residues 120–136 (SVTN…TPSA) and 153–167 (LCET…SDTA). One can recognise a UBX domain in the interval 313–391 (DRSTIARIQF…ELAPSASVVL (79 aa)). Residues 412-432 (LLGTVLYPFLAIWRLISNFLF) lie within the membrane without spanning it. At 433 to 506 (SNPPPAQTSA…TWNGNSTQQM (74 aa)) the chain is on the cytoplasmic side. A disordered region spans residues 437 to 506 (PAQTSARATS…TWNGNSTQQM (70 aa)). A compositionally biased stretch (low complexity) spans 444 to 456 (ATSTEPSNSASSS). The span at 457-489 (KSEKREPVRKRMLEKRGEDFKKEGKIYRLRTQD) shows a compositional bias: basic and acidic residues. Thr487 bears the Phosphothreonine mark. Residues 496 to 506 (NTWNGNSTQQM) are compositionally biased toward polar residues.

As to quaternary structure, directly interacts with VCP. Interacts with UBQLN1. Forms a complex with VCP and UBQLN1. As to expression, expressed in many tissues, including brain, heart, kidney, liver, muscle and spleen (at protein level).

The protein resides in the endoplasmic reticulum membrane. The protein localises to the nucleus envelope. Involved in endoplasmic reticulum-associated protein degradation (ERAD). Acts as a platform to recruit both UBQLN1 and VCP to the ER during ERAD. The protein is UBX domain-containing protein 4 (Ubxn4) of Mus musculus (Mouse).